Here is a 147-residue protein sequence, read N- to C-terminus: MVHFTAEEKAAITSLWGKMNVEEAGGEALGRLLVVYPWTQRFFDNFGNLSSPSAILGNPKVKAHGKKVLTSFGDAIKNMDNLKTTFAKLSELHCDKLHVDPENFRLLGNVMVIILATHFGKEFTPEVQAAWQKLVSAVAIALGHKYH.

Residues His3–His147 enclose the Globin domain. Residues Ser14 and Ser51 each carry the phosphoserine modification. Positions 64 and 93 each coordinate heme b.

Belongs to the globin family. Heterotetramer of two alpha chains and two epsilon chains in early embryonic hemoglobin Gower-2; two zeta chains and two epsilon chains in early embryonic hemoglobin Gower-1. Red blood cells.

Its function is as follows. The epsilon chain is a beta-type chain of early mammalian embryonic hemoglobin. The polypeptide is Hemoglobin subunit epsilon (HBE1) (Alouatta belzebul (Red-handed howler monkey)).